A 122-amino-acid chain; its full sequence is MSEVIEMVSKQPRKQRKARYTAPLHIRQKFMGARLSEALAKQYGTRSAAVITGDTVKIMRGDFKGTEGKVQSVSLMDGTIAVDGVISTKVDGTEVPRPINPSNVMITKLEMKDGRRASSIKK.

Belongs to the universal ribosomal protein uL24 family. As to quaternary structure, part of the 50S ribosomal subunit.

Its function is as follows. One of two assembly initiator proteins, it binds directly to the 5'-end of the 23S rRNA, where it nucleates assembly of the 50S subunit. Functionally, located at the polypeptide exit tunnel on the outside of the subunit. This is Large ribosomal subunit protein uL24 from Methanosarcina mazei (strain ATCC BAA-159 / DSM 3647 / Goe1 / Go1 / JCM 11833 / OCM 88) (Methanosarcina frisia).